The sequence spans 378 residues: Chorismate synthase (378 aa).

Positions 37-60 (EEEIQKDLTRRRPGQNDLTTPRDE) are disordered. Arg47 contributes to the NADP(+) binding site. Residues 124–126 (RSS), Gly289, 304–308 (KPTST), and Arg330 contribute to the FMN site.

Belongs to the chorismate synthase family. In terms of assembly, homotetramer. Requires FMNH2 as cofactor.

It carries out the reaction 5-O-(1-carboxyvinyl)-3-phosphoshikimate = chorismate + phosphate. The protein operates within metabolic intermediate biosynthesis; chorismate biosynthesis; chorismate from D-erythrose 4-phosphate and phosphoenolpyruvate: step 7/7. Catalyzes the anti-1,4-elimination of the C-3 phosphate and the C-6 proR hydrogen from 5-enolpyruvylshikimate-3-phosphate (EPSP) to yield chorismate, which is the branch point compound that serves as the starting substrate for the three terminal pathways of aromatic amino acid biosynthesis. This reaction introduces a second double bond into the aromatic ring system. The chain is Chorismate synthase from Leptospira biflexa serovar Patoc (strain Patoc 1 / Ames).